Consider the following 87-residue polypeptide: uncharacterized protein (87 aa).

This is an uncharacterized protein from Bacillus phage phi105 (Bacteriophage phi-105).